The sequence spans 257 residues: V-type proton ATPase subunit D (257 aa).

Residues 211-233 form a disordered region; sequence KKKDLKAKEAQKEENSANKTIME. Over residues 216–226 the composition is skewed to basic and acidic residues; it reads KAKEAQKEENS.

This sequence belongs to the V-ATPase D subunit family. In terms of assembly, V-ATPase is a heteromultimeric enzyme composed of a peripheral catalytic V1 complex (components A to H) attached to an integral membrane V0 proton pore complex (components: a, c, c', c'' and d).

In terms of biological role, subunit of the peripheral V1 complex of vacuolar ATPase. Vacuolar ATPase is responsible for acidifying a variety of intracellular compartments in eukaryotic cells, thus providing most of the energy required for transport processes in the vacuolar system. In Dictyostelium discoideum (Social amoeba), this protein is V-type proton ATPase subunit D (atp6v1d).